Here is a 518-residue protein sequence, read N- to C-terminus: Apolipoprotein N-acyltransferase (518 aa).

6 consecutive transmembrane segments (helical) span residues Leu-22–Ile-42, Phe-63–Val-83, Ala-101–Phe-121, Leu-134–Phe-154, Ile-174–Cys-194, and Leu-202–Ile-222. A CN hydrolase domain is found at Val-234–Leu-484. The Proton acceptor role is filled by Glu-273. Residue Lys-343 is part of the active site. Cys-395 functions as the Nucleophile in the catalytic mechanism. A helical transmembrane segment spans residues Ala-492–Ile-512.

The protein belongs to the CN hydrolase family. Apolipoprotein N-acyltransferase subfamily.

The protein localises to the cell inner membrane. It carries out the reaction N-terminal S-1,2-diacyl-sn-glyceryl-L-cysteinyl-[lipoprotein] + a glycerophospholipid = N-acyl-S-1,2-diacyl-sn-glyceryl-L-cysteinyl-[lipoprotein] + a 2-acyl-sn-glycero-3-phospholipid + H(+). It functions in the pathway protein modification; lipoprotein biosynthesis (N-acyl transfer). Functionally, catalyzes the phospholipid dependent N-acylation of the N-terminal cysteine of apolipoprotein, the last step in lipoprotein maturation. This Shewanella oneidensis (strain ATCC 700550 / JCM 31522 / CIP 106686 / LMG 19005 / NCIMB 14063 / MR-1) protein is Apolipoprotein N-acyltransferase.